The primary structure comprises 1548 residues: Lysine-specific demethylase 5D (1548 aa).

In terms of domain architecture, JmjN spans 14–55; it reads CPVFEPSWAEFRDPLGYIAKIRPIAEKSGICKIRPPADWQPP. The 91-residue stretch at 79–169 folds into the ARID domain; it reads TRVKLNYLDQ…IIYPYEIFQS (91 aa). Glycyl lysine isopeptide (Lys-Gly) (interchain with G-Cter in SUMO2) cross-links involve residues Lys205, Lys229, Lys244, and Lys279. The interval 208-229 is disordered; sequence CYSRRGKRLQPEPEPTEEDIEK. Ser300 and Ser316 each carry phosphoserine. The PHD-type 1 zinc finger occupies 325-371; sequence VCRICSRGDEVDKFLLCDGCSDNYHIFCLLPPLSEVPKGVWRCPKCI. A 2-oxoglutarate-binding site is contributed by Tyr439. In terms of domain architecture, JmjC spans 467–633; sequence EYAACGWNLN…VGRQCIEHYR (167 aa). His513 and Glu515 together coordinate Fe cation. Ser521, Asn523, and Lys531 together coordinate 2-oxoglutarate. His601 contributes to the Fe cation binding site. A C5HC2 zinc finger spans residues 706–758; the sequence is CIKCKTTCFLSALACYDCPDSLVCLSHINDLCKCSRNRQYLRYRYTLDELPAM. 2 positions are modified to phosphoserine: Ser889 and Ser893. A Glycyl lysine isopeptide (Lys-Gly) (interchain with G-Cter in SUMO2) cross-link involves residue Lys1123. A PHD-type 2 zinc finger spans residues 1182–1243; that stretch reads ICICGQVCAG…DTKFLCPLCM (62 aa). At Ser1355 the chain carries Phosphoserine. The segment at 1438 to 1468 is disordered; it reads KPENPGNWSEEQTPERRRQRRQKVVLSRKGE.

This sequence belongs to the JARID1 histone demethylase family. As to quaternary structure, interacts withPCGF6, MSH5, ZMYND8, AR. L-ascorbate is required as a cofactor. Fe(2+) serves as cofactor.

The protein resides in the nucleus. The enzyme catalyses N(6),N(6),N(6)-trimethyl-L-lysyl(4)-[histone H3] + 3 2-oxoglutarate + 3 O2 = L-lysyl(4)-[histone H3] + 3 formaldehyde + 3 succinate + 3 CO2. Functionally, histone demethylase that specifically demethylates 'Lys-4' of histone H3, thereby playing a central role in histone code. Does not demethylate histone H3 'Lys-9', H3 'Lys-27', H3 'Lys-36', H3 'Lys-79' or H4 'Lys-20'. Demethylates trimethylated and dimethylated but not monomethylated H3 'Lys-4'. May play a role in spermatogenesis. Involved in transcriptional repression of diverse metastasis-associated genes; in this function seems to cooperate with ZMYND8. Suppresses prostate cancer cell invasion. Regulates androgen receptor (AR) transcriptional activity by demethylating H3K4me3 active transcription marks. In Mus musculus (Mouse), this protein is Lysine-specific demethylase 5D (Kdm5d).